A 932-amino-acid polypeptide reads, in one-letter code: MYCBP-associated protein (932 aa).

Disordered regions lie at residues Met1 to Asn39 and Glu165 to His187. Positions Glu165–Pro178 are enriched in basic and acidic residues. Ser559 bears the Phosphoserine mark. The residue at position 560 (Thr560) is a Phosphothreonine. Ser566 bears the Phosphoserine mark. The segment at Leu789–Pro886 is disordered. Over residues Gln795–Thr806 the composition is skewed to polar residues. Positions Ala810–Ser869 are enriched in basic and acidic residues.

As to quaternary structure, interacts with MYCBP.

It is found in the cytoplasm. The protein resides in the membrane. May play a role in spermatogenesis. May be involved in synaptic processes. In Mus musculus (Mouse), this protein is MYCBP-associated protein.